We begin with the raw amino-acid sequence, 326 residues long: tRNA-modifying protein YgfZ (326 aa).

2 residues coordinate folate: Trp27 and Trp189.

Belongs to the tRNA-modifying YgfZ family.

It localises to the cytoplasm. Folate-binding protein involved in regulating the level of ATP-DnaA and in the modification of some tRNAs. It is probably a key factor in regulatory networks that act via tRNA modification, such as initiation of chromosomal replication. This is tRNA-modifying protein YgfZ from Escherichia coli O6:H1 (strain CFT073 / ATCC 700928 / UPEC).